A 355-amino-acid polypeptide reads, in one-letter code: Zinc finger protein CONSTANS-LIKE 5 (355 aa).

The Zn(2+) site is built by Cys-22, Cys-25, Cys-45, His-50, Cys-61, Cys-64, Cys-84, and His-89. Residues 22–60 form a B box-type 1; atypical zinc finger; sequence CDACKSVTAAVFCRVDSAFLCIACDTRIHSFTRHERVWV. The B box-type 2; atypical zinc finger occupies 61–103; it reads CEVCEQAPAAVTCKADAAALCVSCDADIHSANPLASRHERVPV. The CCT domain maps to 285 to 327; that stretch reads REARVLRYREKRKNRKFEKTIRYASRKAYAESRPRIKGRFAKR.

It belongs to the CONSTANS family.

It localises to the nucleus. This chain is Zinc finger protein CONSTANS-LIKE 5 (COL5), found in Arabidopsis thaliana (Mouse-ear cress).